The sequence spans 181 residues: Isopentenyl-diphosphate Delta-isomerase (181 aa).

Mn(2+)-binding residues include His24 and His30. Residues 28-168 (LLHLAFSVLL…PDTFSVWFPT (141 aa)) form the Nudix hydrolase domain. Residue Cys68 is part of the active site. His70 serves as a coordination point for Mn(2+). Glu88 contributes to the Mg(2+) binding site. The Mn(2+) site is built by Glu117 and Glu119. Residue Glu119 is part of the active site.

Belongs to the IPP isomerase type 1 family. It depends on Mg(2+) as a cofactor. Mn(2+) is required as a cofactor.

The protein resides in the cytoplasm. The catalysed reaction is isopentenyl diphosphate = dimethylallyl diphosphate. It participates in isoprenoid biosynthesis; dimethylallyl diphosphate biosynthesis; dimethylallyl diphosphate from isopentenyl diphosphate: step 1/1. Catalyzes the 1,3-allylic rearrangement of the homoallylic substrate isopentenyl (IPP) to its highly electrophilic allylic isomer, dimethylallyl diphosphate (DMAPP). This chain is Isopentenyl-diphosphate Delta-isomerase, found in Aliivibrio fischeri (strain MJ11) (Vibrio fischeri).